Consider the following 193-residue polypeptide: Cytidylate kinase (193 aa).

ATP is bound at residue glycine 12–threonine 20.

The protein belongs to the cytidylate kinase family. Type 2 subfamily.

The protein resides in the cytoplasm. The catalysed reaction is CMP + ATP = CDP + ADP. It carries out the reaction dCMP + ATP = dCDP + ADP. This Methanopyrus kandleri (strain AV19 / DSM 6324 / JCM 9639 / NBRC 100938) protein is Cytidylate kinase.